A 337-amino-acid polypeptide reads, in one-letter code: DNA-directed RNA polymerase subunit alpha (337 aa).

The alpha N-terminal domain (alpha-NTD) stretch occupies residues 1 to 233; that stretch reads MIQKNWQELI…DQLSIFVNFE (233 aa). Residues 249-337 form an alpha C-terminal domain (alpha-CTD) region; that stretch reads FNPALLKKVD…DLAKRYEDQY (89 aa).

It belongs to the RNA polymerase alpha chain family. Homodimer. The RNAP catalytic core consists of 2 alpha, 1 beta, 1 beta' and 1 omega subunit. When a sigma factor is associated with the core the holoenzyme is formed, which can initiate transcription.

It catalyses the reaction RNA(n) + a ribonucleoside 5'-triphosphate = RNA(n+1) + diphosphate. DNA-dependent RNA polymerase catalyzes the transcription of DNA into RNA using the four ribonucleoside triphosphates as substrates. This is DNA-directed RNA polymerase subunit alpha from Brucella ovis (strain ATCC 25840 / 63/290 / NCTC 10512).